The following is a 686-amino-acid chain: XK-related protein 5 (686 aa).

The next 5 membrane-spanning stretches (helical) occupy residues 33–53 (LLWG…QALS), 205–225 (HFWV…WLVA), 239–259 (LFNL…WDSP), 265–285 (VTFY…ATDF), and 297–317 (IAGV…YYSL). Disordered stretches follow at residues 339–387 (GDKT…PPEA), 448–468 (ALSA…LENS), and 490–592 (FASD…APFP). Basic and acidic residues predominate over residues 340-359 (DKTERRDSPRATDLAGKRTE). Polar residues-rich tracts occupy residues 450-468 (SAQQ…LENS) and 490-509 (FASD…TQGE). A compositionally biased stretch (gly residues) spans 523–536 (QGKGTGGQQRGGEG). Polar residues predominate over residues 550 to 567 (VATSSQQEGSPATLQTAH).

This sequence belongs to the XK family.

It is found in the cell membrane. The protein is XK-related protein 5 of Homo sapiens (Human).